Reading from the N-terminus, the 223-residue chain is 7-cyano-7-deazaguanine synthase (223 aa).

F15–L25 is a binding site for ATP. Residues C191, C200, C203, and C206 each coordinate Zn(2+).

It belongs to the QueC family. As to quaternary structure, homodimer. Zn(2+) is required as a cofactor.

It catalyses the reaction 7-carboxy-7-deazaguanine + NH4(+) + ATP = 7-cyano-7-deazaguanine + ADP + phosphate + H2O + H(+). Its pathway is purine metabolism; 7-cyano-7-deazaguanine biosynthesis. Functionally, catalyzes the ATP-dependent conversion of 7-carboxy-7-deazaguanine (CDG) to 7-cyano-7-deazaguanine (preQ(0)). This chain is 7-cyano-7-deazaguanine synthase, found in Staphylococcus haemolyticus (strain JCSC1435).